A 234-amino-acid chain; its full sequence is Glutathione S-transferase U16 (234 aa).

The region spanning 5–85 (EEVKLLGVWY…YIDETWNSSA (81 aa)) is the GST N-terminal domain. Glutathione contacts are provided by residues 15 to 16 (SP), 42 to 43 (SK), 56 to 57 (KV), and 69 to 70 (ES). The GST C-terminal domain occupies 92-219 (HPYDRALARF…APEIEKVAEF (128 aa)).

This sequence belongs to the GST superfamily. Tau family.

Its subcellular location is the cytoplasm. It localises to the cytosol. The enzyme catalyses RX + glutathione = an S-substituted glutathione + a halide anion + H(+). Functionally, may be involved in the conjugation of reduced glutathione to a wide number of exogenous and endogenous hydrophobic electrophiles and have a detoxification role against certain herbicides. The polypeptide is Glutathione S-transferase U16 (GSTU16) (Arabidopsis thaliana (Mouse-ear cress)).